The chain runs to 211 residues: Large ribosomal subunit protein eL13 (211 aa).

Belongs to the eukaryotic ribosomal protein eL13 family. As to quaternary structure, component of the 60S large ribosomal subunit (LSU).

It localises to the cytoplasm. Its function is as follows. Component of the ribosome, a large ribonucleoprotein complex responsible for the synthesis of proteins in the cell. The small ribosomal subunit (SSU) binds messenger RNAs (mRNAs) and translates the encoded message by selecting cognate aminoacyl-transfer RNA (tRNA) molecules. The large subunit (LSU) contains the ribosomal catalytic site termed the peptidyl transferase center (PTC), which catalyzes the formation of peptide bonds, thereby polymerizing the amino acids delivered by tRNAs into a polypeptide chain. The nascent polypeptides leave the ribosome through a tunnel in the LSU and interact with protein factors that function in enzymatic processing, targeting, and the membrane insertion of nascent chains at the exit of the ribosomal tunnel. As part of the LSU, it is probably required for its formation and the maturation of rRNAs. The polypeptide is Large ribosomal subunit protein eL13 (rpl13) (Ictalurus punctatus (Channel catfish)).